The following is a 530-amino-acid chain: tRNA-2-methylthio-N(6)-dimethylallyladenosine synthase (530 aa).

The region spanning 19–134 (RTYEVRTYGC…LPTLLERARH (116 aa)) is the MTTase N-terminal domain. 6 residues coordinate [4Fe-4S] cluster: cysteine 28, cysteine 63, cysteine 97, cysteine 171, cysteine 175, and cysteine 178. The region spanning 157 to 387 (RDEIASGWVS…TALQERISHE (231 aa)) is the Radical SAM core domain. A TRAM domain is found at 390 to 460 (QRVVGRTVEV…PFHLIADSVD (71 aa)). Positions 509–530 (VPTTASTSAPVGDGSAHPRHRA) are disordered.

It belongs to the methylthiotransferase family. MiaB subfamily. In terms of assembly, monomer. Requires [4Fe-4S] cluster as cofactor.

The protein resides in the cytoplasm. It carries out the reaction N(6)-dimethylallyladenosine(37) in tRNA + (sulfur carrier)-SH + AH2 + 2 S-adenosyl-L-methionine = 2-methylsulfanyl-N(6)-dimethylallyladenosine(37) in tRNA + (sulfur carrier)-H + 5'-deoxyadenosine + L-methionine + A + S-adenosyl-L-homocysteine + 2 H(+). Functionally, catalyzes the methylthiolation of N6-(dimethylallyl)adenosine (i(6)A), leading to the formation of 2-methylthio-N6-(dimethylallyl)adenosine (ms(2)i(6)A) at position 37 in tRNAs that read codons beginning with uridine. This chain is tRNA-2-methylthio-N(6)-dimethylallyladenosine synthase, found in Clavibacter sepedonicus (Clavibacter michiganensis subsp. sepedonicus).